We begin with the raw amino-acid sequence, 376 residues long: tRNA-aminoacylation cofactor ARC1 (376 aa).

Positions 22-46 (KEQSAQAAQWESVLKSGQIQPHLDQ) are interaction with methionyl-tRNA synthetase MES1. Interaction with glutamyl-tRNA synthetase GUS1 stretches follow at residues 52–61 (RDNTFIVSTL) and 91–121 (TYTT…EINH). A disordered region spans residues 133–206 (KKKAPAGGAA…QNKAPEKPKP (74 aa)). Residues 146 to 180 (AKADEDVSKKAKKQDHPRGKPDEETLKKLREEAKA) show a composition bias toward basic and acidic residues. Residues 186 to 199 (KAANAKQQQEQQNK) show a composition bias toward low complexity. The 103-residue stretch at 205 to 307 (KPSAIDFRVG…KDSKAGDKVF (103 aa)) folds into the tRNA-binding domain.

This sequence belongs to the tRNA-aminoacylation cofactor ARC1 family. As to quaternary structure, component of a yeast aminoacyl-tRNA synthase (aaRS) complex formed by methionyl-tRNA synthase MES1, glutamyl-tRNA synthase GUS1 and the tRNA aminoacylation cofactor ARC1 in a stoichiometric complex. Interacts (via N-ter) with MES1 (via N-ter) and GUS1 (via N-ter). Can also form a stable binary complex with either MES1 or GUS1 that is functional in terms of aminoacylation.

It localises to the cytoplasm. In terms of biological role, binds to tRNA and functions as a cofactor for the methionyl-tRNA synthetase (MetRS) and glutamyl-tRNA synthetase (GluRS). Forms a complex with MetRS and GluRS and increases their affinity for cognate tRNAs due to the presence of a tRNA binding domain in its middle and C-terminal part. Binds specifically G4 quadruplex nucleic acid structures (these are four-stranded right-handed helices, stabilized by guanine base quartets). Also required for cytoplasmic confinement of the synthetases and tRNA. This is tRNA-aminoacylation cofactor ARC1 (ARC1) from Saccharomyces cerevisiae (strain ATCC 204508 / S288c) (Baker's yeast).